Here is a 118-residue protein sequence, read N- to C-terminus: Small ribosomal subunit protein uS13 (118 aa).

The segment at 92–118 is disordered; the sequence is RRSLPVRGQRTKTNARTRKGPRKPIKK.

The protein belongs to the universal ribosomal protein uS13 family. In terms of assembly, part of the 30S ribosomal subunit. Forms a loose heterodimer with protein S19. Forms two bridges to the 50S subunit in the 70S ribosome.

Located at the top of the head of the 30S subunit, it contacts several helices of the 16S rRNA. In the 70S ribosome it contacts the 23S rRNA (bridge B1a) and protein L5 of the 50S subunit (bridge B1b), connecting the 2 subunits; these bridges are implicated in subunit movement. Contacts the tRNAs in the A and P-sites. In Acinetobacter baumannii (strain AB307-0294), this protein is Small ribosomal subunit protein uS13.